Consider the following 544-residue polypeptide: Thermosome subunit (544 aa).

The protein belongs to the TCP-1 chaperonin family. Forms an oligomeric complex of eight-membered rings.

Functionally, molecular chaperone; binds unfolded polypeptides in vitro, and has a weak ATPase activity. In Methanothermococcus thermolithotrophicus (Methanococcus thermolithotrophicus), this protein is Thermosome subunit (ths).